The primary structure comprises 234 residues: ATP synthase subunit a 2 (234 aa).

The next 5 helical transmembrane spans lie at 20 to 40, 78 to 98, 107 to 127, 169 to 189, and 194 to 214; these read ATLIFTWLVMGVLVVGSWFVT, YLPFIGTLFIFIALSNLLSVI, SLSTTTALALCVFFAVPLYGV, VMSGTMIVGILLSVAPLFFPV, and LGLLTGVIQAYIFAILAMVFI.

This sequence belongs to the ATPase A chain family. F-type ATPases have 2 components, CF(1) - the catalytic core - and CF(0) - the membrane proton channel. CF(1) has five subunits: alpha(3), beta(3), gamma(1), delta(1), epsilon(1). CF(0) has four main subunits: a, b, b' and c.

Its subcellular location is the cellular thylakoid membrane. Functionally, key component of the proton channel; it plays a direct role in the translocation of protons across the membrane. The polypeptide is ATP synthase subunit a 2 (Acaryochloris marina (strain MBIC 11017)).